Reading from the N-terminus, the 597-residue chain is Elongation factor 4 (597 aa).

The tr-type G domain occupies 2-184 (KHIRNFSIIA…TIVKSIPAPE (183 aa)). GTP-binding positions include 14-19 (DHGKST) and 131-134 (NKID).

This sequence belongs to the TRAFAC class translation factor GTPase superfamily. Classic translation factor GTPase family. LepA subfamily.

The protein resides in the cell inner membrane. The enzyme catalyses GTP + H2O = GDP + phosphate + H(+). Required for accurate and efficient protein synthesis under certain stress conditions. May act as a fidelity factor of the translation reaction, by catalyzing a one-codon backward translocation of tRNAs on improperly translocated ribosomes. Back-translocation proceeds from a post-translocation (POST) complex to a pre-translocation (PRE) complex, thus giving elongation factor G a second chance to translocate the tRNAs correctly. Binds to ribosomes in a GTP-dependent manner. This chain is Elongation factor 4, found in Aliivibrio fischeri (strain ATCC 700601 / ES114) (Vibrio fischeri).